The chain runs to 372 residues: sn-glycerol-3-phosphate import ATP-binding protein UgpC (372 aa).

One can recognise an ABC transporter domain in the interval 2–233 (LDIQQLVKTY…PASTFVASFI (232 aa)). 35–42 (GPSGCGKS) serves as a coordination point for ATP.

It belongs to the ABC transporter superfamily. sn-glycerol-3-phosphate importer (TC 3.A.1.1.3) family. The complex is composed of two ATP-binding proteins (UgpC), two transmembrane proteins (UgpA and UgpE) and a solute-binding protein (UgpB).

Its subcellular location is the cell inner membrane. The catalysed reaction is sn-glycerol 3-phosphate(out) + ATP + H2O = sn-glycerol 3-phosphate(in) + ADP + phosphate + H(+). Its function is as follows. Part of the ABC transporter complex UgpBAEC involved in sn-glycerol-3-phosphate (G3P) import. Responsible for energy coupling to the transport system. The chain is sn-glycerol-3-phosphate import ATP-binding protein UgpC from Vibrio vulnificus (strain YJ016).